Consider the following 434-residue polypeptide: Maltotriose-binding protein (434 aa).

The signal sequence occupies residues 1–20; sequence MRRATYAFALLAILVLGVVA. Residues 28–52 are disordered; it reads TTTPTQTSPATQPTTTQTPTQTETQ. The segment covering 29 to 52 has biased composition (low complexity); it reads TTPTQTSPATQPTTTQTPTQTETQ.

The protein belongs to the bacterial solute-binding protein 1 family.

Its function is as follows. Involved in an abc transport system for maltotriose. Binds maltotriose much more tightly than maltose. This chain is Maltotriose-binding protein (malE), found in Pyrococcus furiosus (strain ATCC 43587 / DSM 3638 / JCM 8422 / Vc1).